Reading from the N-terminus, the 660-residue chain is GTP-binding protein BRASSINAZOLE INSENSITIVE PALE GREEN 2, chloroplastic (660 aa).

Residues 1 to 53 (MVVLISSTVTICNVKPKLEDGNFRVSRLIHRPEVPFFSGLSNEKKKKCAVSVM) constitute a chloroplast transit peptide. Disordered stretches follow at residues 127 to 158 (EGDE…DDEM) and 191 to 212 (NDVE…TEEK). Residues 130–158 (EHVENDELAGFEMVDDDADEEEEGEDDEM) are compositionally biased toward acidic residues. The CP-type G domain maps to 273–457 (STRLIKPMSN…MYDTPGLLHP (185 aa)).

It belongs to the TRAFAC class YlqF/YawG GTPase family. As to quaternary structure, binds to chloroplast 16S and 23S ribosomal RNAs. In terms of tissue distribution, mostly expressed in stems, petioles, leaves and flowers and, at low levels, also in roots.

The protein localises to the plastid. It is found in the chloroplast stroma. Its function is as follows. Required for brassinosteroid- (BR) mediated post-transcriptional and translational regulation in the chloroplast, including accumulation of chloroplast rRNA. Involved in chloroplast differentiation. The sequence is that of GTP-binding protein BRASSINAZOLE INSENSITIVE PALE GREEN 2, chloroplastic from Arabidopsis thaliana (Mouse-ear cress).